The chain runs to 323 residues: tRNA(Ile)-lysidine synthase (323 aa).

33-38 (SGGSDS) contacts ATP.

The protein belongs to the tRNA(Ile)-lysidine synthase family.

It localises to the cytoplasm. It carries out the reaction cytidine(34) in tRNA(Ile2) + L-lysine + ATP = lysidine(34) in tRNA(Ile2) + AMP + diphosphate + H(+). Its function is as follows. Ligates lysine onto the cytidine present at position 34 of the AUA codon-specific tRNA(Ile) that contains the anticodon CAU, in an ATP-dependent manner. Cytidine is converted to lysidine, thus changing the amino acid specificity of the tRNA from methionine to isoleucine. This is tRNA(Ile)-lysidine synthase from Mycobacterium leprae (strain TN).